The primary structure comprises 327 residues: Beta-ketoacyl-[acyl-carrier-protein] synthase III (327 aa).

Residues Cys-114 and His-254 contribute to the active site. The ACP-binding stretch occupies residues 255–259; it reads QANQR. Residue Asn-284 is part of the active site.

It belongs to the thiolase-like superfamily. FabH family. As to quaternary structure, homodimer.

It localises to the cytoplasm. The catalysed reaction is malonyl-[ACP] + acetyl-CoA + H(+) = 3-oxobutanoyl-[ACP] + CO2 + CoA. It functions in the pathway lipid metabolism; fatty acid biosynthesis. Its function is as follows. Catalyzes the condensation reaction of fatty acid synthesis by the addition to an acyl acceptor of two carbons from malonyl-ACP. Catalyzes the first condensation reaction which initiates fatty acid synthesis and may therefore play a role in governing the total rate of fatty acid production. Possesses both acetoacetyl-ACP synthase and acetyl transacylase activities. Its substrate specificity determines the biosynthesis of branched-chain and/or straight-chain of fatty acids. This Levilactobacillus brevis (strain ATCC 367 / BCRC 12310 / CIP 105137 / JCM 1170 / LMG 11437 / NCIMB 947 / NCTC 947) (Lactobacillus brevis) protein is Beta-ketoacyl-[acyl-carrier-protein] synthase III.